Here is a 216-residue protein sequence, read N- to C-terminus: 3,4-dihydroxy-2-butanone 4-phosphate synthase (216 aa).

D-ribulose 5-phosphate contacts are provided by residues 33–34, D38, 146–150, and E170; these read RE and RRGHT. E34 provides a ligand contact to Mg(2+). H149 serves as a coordination point for Mg(2+).

Belongs to the DHBP synthase family. As to quaternary structure, homodimer. The cofactor is Mg(2+). Mn(2+) serves as cofactor.

The catalysed reaction is D-ribulose 5-phosphate = (2S)-2-hydroxy-3-oxobutyl phosphate + formate + H(+). The protein operates within cofactor biosynthesis; riboflavin biosynthesis; 2-hydroxy-3-oxobutyl phosphate from D-ribulose 5-phosphate: step 1/1. Its function is as follows. Catalyzes the conversion of D-ribulose 5-phosphate to formate and 3,4-dihydroxy-2-butanone 4-phosphate. The polypeptide is 3,4-dihydroxy-2-butanone 4-phosphate synthase (Pseudomonas putida (strain ATCC 47054 / DSM 6125 / CFBP 8728 / NCIMB 11950 / KT2440)).